A 131-amino-acid polypeptide reads, in one-letter code: Proteinase inhibitor (131 aa).

Residues 1–26 (MSASAKLSRMVCLLCGFFSTGISMAS) form the signal peptide. A disulfide bridge connects residues cysteine 51 and cysteine 74.

Belongs to the protease inhibitor I38 family.

It localises to the periplasm. Inhibitor of the alkaline protease. It forms a non-covalent bond with the protease and may prevent its autocatalytic cleavage in the periplasm. This Pseudomonas aeruginosa (strain ATCC 15692 / DSM 22644 / CIP 104116 / JCM 14847 / LMG 12228 / 1C / PRS 101 / PAO1) protein is Proteinase inhibitor (inh).